The sequence spans 122 residues: Large ribosomal subunit protein uL18 (122 aa).

The protein belongs to the universal ribosomal protein uL18 family. Part of the 50S ribosomal subunit; part of the 5S rRNA/L5/L18/L25 subcomplex. Contacts the 5S and 23S rRNAs.

This is one of the proteins that bind and probably mediate the attachment of the 5S RNA into the large ribosomal subunit, where it forms part of the central protuberance. The chain is Large ribosomal subunit protein uL18 from Mycobacterium ulcerans (strain Agy99).